We begin with the raw amino-acid sequence, 244 residues long: tRNA (guanine-N(7)-)-methyltransferase (244 aa).

4 residues coordinate S-adenosyl-L-methionine: E75, E100, D127, and D150. The active site involves D150. Residues K154, D186, and T223–E226 each bind substrate.

The protein belongs to the class I-like SAM-binding methyltransferase superfamily. TrmB family.

It carries out the reaction guanosine(46) in tRNA + S-adenosyl-L-methionine = N(7)-methylguanosine(46) in tRNA + S-adenosyl-L-homocysteine. Its pathway is tRNA modification; N(7)-methylguanine-tRNA biosynthesis. Catalyzes the formation of N(7)-methylguanine at position 46 (m7G46) in tRNA. This is tRNA (guanine-N(7)-)-methyltransferase from Xylella fastidiosa (strain M23).